Here is a 342-residue protein sequence, read N- to C-terminus: Autoinducer 2 import system permease protein LsrC (342 aa).

Residues 1-13 are Periplasmic-facing; that stretch reads MLKFIQNNREITA. A helical membrane pass occupies residues 14–34; sequence LLAVVLLFVLPGFLDRQYLSV. Residues 35–38 are Cytoplasmic-facing; the sequence is QTLT. The chain crosses the membrane as a helical span at residues 39–59; that stretch reads MVYSSAQILILLAMGATLVML. The Periplasmic segment spans residues 60-69; the sequence is TRNIDVSVGS. A helical transmembrane segment spans residues 70 to 90; sequence ITGMCAVLLGMLLNAGYSLPV. The Cytoplasmic segment spans residues 91 to 92; it reads AC. The chain crosses the membrane as a helical span at residues 93–113; it reads VATLLLGLLAGFFNGVLVAWL. Position 114 (K114) is a topological domain, periplasmic. A helical membrane pass occupies residues 115–135; it reads IPAIVATLGTLGLYRGIMLLW. At 136–154 the chain is on the cytoplasmic side; that stretch reads TGGKWIEGLPAELKQLSAP. A helical membrane pass occupies residues 155–175; that stretch reads LLFGVSAIGWLTIILVAFMAW. The Periplasmic segment spans residues 176–212; that stretch reads LLAKTAFGRSFYVTGDNLQGARQLGVRTEAIRIVAFS. Residues 213-233 form a helical membrane-spanning segment; that stretch reads LNGCMAALAGIVFASQIGFIP. Topologically, residues 234 to 251 are cytoplasmic; sequence NQTGTGLEMKAIAACVLG. A helical transmembrane segment spans residues 252-272; sequence GISLLGGSGAIIGAVLGAWFL. The Periplasmic segment spans residues 273 to 283; it reads TQIDSVLVLLR. A helical transmembrane segment spans residues 284–304; it reads IPAWWNDFIAGMVLLAVLVFD. The Cytoplasmic portion of the chain corresponds to 305–342; that stretch reads GRLRCALERNLRRQKYARFMMPPPPVKPASSGKKREAA.

It belongs to the binding-protein-dependent transport system permease family. AraH/RbsC subfamily. As to quaternary structure, the complex is composed of two ATP-binding proteins (LsrA), two transmembrane proteins (LsrC and LsrD) and a solute-binding protein (LsrB).

Its subcellular location is the cell inner membrane. Its function is as follows. Part of the ABC transporter complex LsrABCD involved in autoinducer 2 (AI-2) import. Probably responsible for the translocation of the substrate across the membrane. The protein is Autoinducer 2 import system permease protein LsrC (lsrC) of Escherichia coli (strain SMS-3-5 / SECEC).